A 98-amino-acid chain; its full sequence is Hainantoxin-XVII.2 (98 aa).

Positions 1–40 (MTTVGVSLFRRSPEKITMKIAAFLGLSFLLIASYVLICEA) are cleaved as a signal peptide. The propeptide occupies 41 to 64 (QHPGFQELLILEENMRDPENSKER). 3 cysteine pairs are disulfide-bonded: cysteine 66/cysteine 81, cysteine 73/cysteine 85, and cysteine 80/cysteine 95.

It belongs to the hainantoxin family. 17 subfamily. Expressed by the venom gland.

Its subcellular location is the secreted. Its function is as follows. Putative ion channel inhibitor. The chain is Hainantoxin-XVII.2 from Cyriopagopus hainanus (Chinese bird spider).